Consider the following 493-residue polypeptide: Glutamate--tRNA ligase (493 aa).

The short motif at 10 to 20 is the 'HIGH' region element; the sequence is PSPTGDPHVGT. The 'KMSKS' region signature appears at 251 to 255; it reads KLSKR. Residue lysine 254 participates in ATP binding.

It belongs to the class-I aminoacyl-tRNA synthetase family. Glutamate--tRNA ligase type 1 subfamily. As to quaternary structure, monomer.

It localises to the cytoplasm. The enzyme catalyses tRNA(Glu) + L-glutamate + ATP = L-glutamyl-tRNA(Glu) + AMP + diphosphate. Catalyzes the attachment of glutamate to tRNA(Glu) in a two-step reaction: glutamate is first activated by ATP to form Glu-AMP and then transferred to the acceptor end of tRNA(Glu). The chain is Glutamate--tRNA ligase from Marinomonas sp. (strain MWYL1).